The sequence spans 7192 residues: Nonribosomal peptide synthetase gloA (7192 aa).

Residues 1–48 (MTPSRSLENGEKQMNWNESPQTASPKNVLRDSNSNGNYVNGHGTNING) are compositionally biased toward polar residues. The disordered stretch occupies residues 1-52 (MTPSRSLENGEKQMNWNESPQTASPKNVLRDSNSNGNYVNGHGTNINGDGSD). The region spanning 105-181 (HSTSKFKEEF…GLFATANFRP (77 aa)) is the Carrier 1 domain. Residue Ser142 is modified to O-(pantetheine 4'-phosphoryl)serine. Residues 239–634 (EDVYPCTPLQ…TYTVQCLCNP (396 aa)) are condensation 1. Positions 675–1047 (QDQVNIQPAK…SLMYLGRCDS (373 aa)) are adenylation 1. The Carrier 2 domain occupies 1190–1266 (APSTDAEKQV…DLAFVIQRRL (77 aa)). Ser1227 is modified (O-(pantetheine 4'-phosphoryl)serine). A condensation 2 region spans residues 1316–1736 (EDIYPCTPLQ…MSWLSDYDEE (421 aa)). The segment at 1758–2154 (QEQTKLRPNA…GRRDTQIKIR (397 aa)) is adenylation 2. The Carrier 3 domain maps to 2288–2364 (APSTREECLV…ELAELLAKRS (77 aa)). Ser2325 is subject to O-(pantetheine 4'-phosphoryl)serine. The interval 2407–2829 (VEDVYPCTPL…LIAPEDQEQI (423 aa)) is condensation 3. The segment at 2849–3245 (YKQVMARPQA…GRRDDQIKIR (397 aa)) is adenylation 3. The 78-residue stretch at 3378–3455 (TPSTKMEKVI…DLASVMTEHR (78 aa)) folds into the Carrier 4 domain. O-(pantetheine 4'-phosphoryl)serine is present on Ser3415. The tract at residues 3502–3891 (EDIYPCTALQ…NGVLDQFVYI (390 aa)) is condensation 4. The adenylation 4 stretch occupies residues 3920-4320 (QEQALARPTA…ARRDMQVKIR (401 aa)). The 77-residue stretch at 4453-4529 (LPSTQVELQL…ELAVILDGRK (77 aa)) folds into the Carrier 5 domain. Ser4490 is subject to O-(pantetheine 4'-phosphoryl)serine. Positions 4574 to 4971 (EDIYPCTPLQ…QFEYVVQKFH (398 aa)) are condensation 5. The adenylation 5 stretch occupies residues 5013 to 5414 (DDHVAARPMA…GRQDLQVKIR (402 aa)). A Carrier 6 domain is found at 5551–5627 (APDTDLGRLI…DLVNTLSNRS (77 aa)). Position 5588 is an O-(pantetheine 4'-phosphoryl)serine (Ser5588). The condensation 6 stretch occupies residues 5674–6071 (EDVYPSTPLQ…CVVQRILTQS (398 aa)). The tract at residues 6111-6507 (QAQVKKSPAA…GRRDLQVKIR (397 aa)) is adenylation 6. Positions 6645–6721 (NPSTTMERQL…DLAVVLTDRL (77 aa)) constitute a Carrier 7 domain. Ser6682 carries the post-translational modification O-(pantetheine 4'-phosphoryl)serine. Residues 6795–7178 (NGPCDTRALK…NPLSPVKQVL (384 aa)) are condensation 7.

Belongs to the NRP synthetase family.

It functions in the pathway mycotoxin biosynthesis. Nonribosomal peptide synthetase; part of the gene cluster that mediates the biosynthesis of pneumocandins, lipohexapeptides of the echinocandin family that prevent fungal cell wall formation by non-competitive inhibition of beta-1,3-glucan synthase. The 10,12-dimethylmyristoyl side chain is synthesized by the reducing polyketide synthase gloL/GLPKS4. The thioesterase gloN/GLHYD exclusively interacts with gloL/GLPKS4 to maintain turnover of the polyketide side chain. The 10R,12S-dimethylmyristic acid is then transferred to the first thiolation domain of the nonribosomal peptide synthetase gloA/GLNRPS4 by the acyl-AMP ligase gloD/GLligase, followed by its acylation to L-ornithine to trigger elongation of the cyclic hexapeptide. L-ornithine, 4R-hydroxyl-L-proline (generated from L-proline by the dioxygenase gloF/GLOXY2), 3S-hydroxyl-L-homotyrosine (generated by gloG/GLHtyB, gloH/GLHtyA, gloI/GLHtyC, gloJ/GLHtyD and hydroxylated at C-3 by the dioxygenase gloM/GLOXY1), 3R-hydroxyl-L-glutamine (generated from L-glutamine probably by the dioxygenase gloE/GLOXY3) and 3S-hydroxyl-L-proline (generated from L-proline by the dioxygenase gloF/GLOXY2 to yield pneumocandin B0), or 3S-hydroxyl-4S-methyl-L-proline (generated from L-leucine by the dioxygenase gloC/GLOXY4 to yield pneumocandin A0) are sequentially added to the growing chain. The last C domain of gloA/GLNRPS4 is proposed to be responsible for cyclization by condensation to form the peptide bond between L-ornithine and 3S-hydroxyl-4S-methyl-L-proline (for pneumocandin A0) or 3S-hydroxyl-L-proline (for pneumocandin B0). Finally, the subsequent C-4 hydroxylation of 3S-hydroxyl-L-homotyrosine and L-ornithine dihydroxylation at C-4 and C-5 are performed by the cytochrome P450 monooxygenases gloP/GLP450-1 and gloO/GLP450-2, respectively. In Glarea lozoyensis (strain ATCC 20868 / MF5171), this protein is Nonribosomal peptide synthetase gloA.